The chain runs to 215 residues: Urease accessory protein UreE (215 aa).

The tract at residues 134–215 is disordered; sequence FDPEGGAYAP…HGHSHKHDHK (82 aa). The segment covering 164-206 has biased composition (basic and acidic residues); it reads GHHDHADHEHDHKHDHGKHDHAGHDHAHDHHVHDEHCGHDHGH.

It belongs to the UreE family.

The protein localises to the cytoplasm. Functionally, involved in urease metallocenter assembly. Binds nickel. Probably functions as a nickel donor during metallocenter assembly. This Rhodopseudomonas palustris (strain HaA2) protein is Urease accessory protein UreE.